The following is a 254-amino-acid chain: 3-deoxy-manno-octulosonate cytidylyltransferase (254 aa).

This sequence belongs to the KdsB family.

It localises to the cytoplasm. The catalysed reaction is 3-deoxy-alpha-D-manno-oct-2-ulosonate + CTP = CMP-3-deoxy-beta-D-manno-octulosonate + diphosphate. It functions in the pathway nucleotide-sugar biosynthesis; CMP-3-deoxy-D-manno-octulosonate biosynthesis; CMP-3-deoxy-D-manno-octulosonate from 3-deoxy-D-manno-octulosonate and CTP: step 1/1. It participates in bacterial outer membrane biogenesis; lipopolysaccharide biosynthesis. Its function is as follows. Activates KDO (a required 8-carbon sugar) for incorporation into bacterial lipopolysaccharide in Gram-negative bacteria. This chain is 3-deoxy-manno-octulosonate cytidylyltransferase, found in Geobacter metallireducens (strain ATCC 53774 / DSM 7210 / GS-15).